Consider the following 357-residue polypeptide: Histidine biosynthesis bifunctional protein HisB (357 aa).

A histidinol-phosphatase region spans residues 1 to 168 (MTPILFIDRD…GIAHALADAP (168 aa)). D8 acts as the Nucleophile in catalysis. Mg(2+)-binding residues include D8, D10, and D128. The active-site Proton donor is D10. Residues 169 to 357 (RTAVVQRDTK…TALPSTKGAL (189 aa)) form an imidazoleglycerol-phosphate dehydratase region.

It in the N-terminal section; belongs to the histidinol-phosphatase family. In the C-terminal section; belongs to the imidazoleglycerol-phosphate dehydratase family. Mg(2+) is required as a cofactor.

The protein resides in the cytoplasm. It catalyses the reaction D-erythro-1-(imidazol-4-yl)glycerol 3-phosphate = 3-(imidazol-4-yl)-2-oxopropyl phosphate + H2O. It carries out the reaction L-histidinol phosphate + H2O = L-histidinol + phosphate. It participates in amino-acid biosynthesis; L-histidine biosynthesis; L-histidine from 5-phospho-alpha-D-ribose 1-diphosphate: step 6/9. It functions in the pathway amino-acid biosynthesis; L-histidine biosynthesis; L-histidine from 5-phospho-alpha-D-ribose 1-diphosphate: step 8/9. The protein is Histidine biosynthesis bifunctional protein HisB of Stenotrophomonas maltophilia (strain K279a).